Here is a 526-residue protein sequence, read N- to C-terminus: Peptide chain release factor 3 (526 aa).

Residues 9 to 277 (DKRRTFAIIS…GIVEWAPKPL (269 aa)) enclose the tr-type G domain. GTP is bound by residues 18–25 (SHPDAGKT), 86–90 (DTPGH), and 140–143 (NKLD).

This sequence belongs to the TRAFAC class translation factor GTPase superfamily. Classic translation factor GTPase family. PrfC subfamily.

The protein localises to the cytoplasm. Its function is as follows. Increases the formation of ribosomal termination complexes and stimulates activities of RF-1 and RF-2. It binds guanine nucleotides and has strong preference for UGA stop codons. It may interact directly with the ribosome. The stimulation of RF-1 and RF-2 is significantly reduced by GTP and GDP, but not by GMP. This Shewanella baltica (strain OS223) protein is Peptide chain release factor 3.